The primary structure comprises 351 residues: Translation initiation factor eIF2B subunit beta (351 aa).

This sequence belongs to the eIF-2B alpha/beta/delta subunits family. In terms of assembly, component of the translation initiation factor 2B (eIF2B) complex which is a heterodecamer of two sets of five different subunits: alpha, beta, gamma, delta and epsilon. Subunits alpha, beta and delta comprise a regulatory subcomplex and subunits epsilon and gamma comprise a catalytic subcomplex. Within the complex, the hexameric regulatory complex resides at the center, with the two heterodimeric catalytic subcomplexes bound on opposite sides.

It localises to the cytoplasm. It is found in the cytosol. Its activity is regulated as follows. Activated by the chemical integrated stress response (ISR) inhibitor ISRIB which stimulates guanine nucleotide exchange factor activity for both phosphorylated and unphosphorylated eIF2. Functionally, acts as a component of the translation initiation factor 2B (eIF2B) complex, which catalyzes the exchange of GDP for GTP on eukaryotic initiation factor 2 (eIF2) gamma subunit. Its guanine nucleotide exchange factor activity is repressed when bound to eIF2 complex phosphorylated on the alpha subunit, thereby limiting the amount of methionyl-initiator methionine tRNA available to the ribosome and consequently global translation is repressed. In Mus musculus (Mouse), this protein is Translation initiation factor eIF2B subunit beta (Eif2b2).